The following is a 344-amino-acid chain: Aromatic amino acid aminotransferase (344 aa).

Lys213 carries the post-translational modification N6-(pyridoxal phosphate)lysine.

The protein belongs to the class-II pyridoxal-phosphate-dependent aminotransferase family. Homodimer. Pyridoxal 5'-phosphate is required as a cofactor.

It catalyses the reaction an aromatic L-alpha-amino acid + 2-oxoglutarate = an aromatic oxo-acid + L-glutamate. Functionally, aminotransferase that catalyzes the conversion of aromatic amino acids and 2-oxoglutarate into corresponding aromatic oxo acids and L-glutamate. The sequence is that of Aromatic amino acid aminotransferase from Corynebacterium diphtheriae (strain ATCC 700971 / NCTC 13129 / Biotype gravis).